We begin with the raw amino-acid sequence, 491 residues long: Ribonuclease Y (491 aa).

The helical transmembrane segment at 4-24 threads the bilayer; that stretch reads LIATVGVVAVAALVIAIFVVI. The KH domain occupies 181 to 247; that stretch reads VVSVVHLPGD…RVALERLVDD (67 aa). The HD domain maps to 307–400; the sequence is VLKHLVETAH…TQAADAISGG (94 aa).

It belongs to the RNase Y family.

Its subcellular location is the cell membrane. Endoribonuclease that initiates mRNA decay. This is Ribonuclease Y from Acidothermus cellulolyticus (strain ATCC 43068 / DSM 8971 / 11B).